The chain runs to 388 residues: Beta-lactamase (388 aa).

Positions 1-24 (MMKKSIINTLIFTSIATFPLYTLA) are cleaved as a signal peptide. Ser-89 (acyl-ester intermediate) is an active-site residue. Tyr-175 functions as the Proton acceptor in the catalytic mechanism. 342 to 344 (KTG) serves as a coordination point for substrate.

It belongs to the class-C beta-lactamase family.

It localises to the periplasm. It carries out the reaction a beta-lactam + H2O = a substituted beta-amino acid. This protein is a serine beta-lactamase with a substrate specificity for cephalosporins. The chain is Beta-lactamase (ampC) from Yersinia enterocolitica.